A 491-amino-acid polypeptide reads, in one-letter code: Cobyric acid synthase (491 aa).

Positions 246–432 (RKLIACPILP…VHGLLADAEL (187 aa)) constitute a GATase cobBQ-type domain. Cys-328 acts as the Nucleophile in catalysis. The active site involves His-424.

The protein belongs to the CobB/CobQ family. CobQ subfamily.

It participates in cofactor biosynthesis; adenosylcobalamin biosynthesis. Functionally, catalyzes amidations at positions B, D, E, and G on adenosylcobyrinic A,C-diamide. NH(2) groups are provided by glutamine, and one molecule of ATP is hydrogenolyzed for each amidation. This Novosphingobium aromaticivorans (strain ATCC 700278 / DSM 12444 / CCUG 56034 / CIP 105152 / NBRC 16084 / F199) protein is Cobyric acid synthase.